Here is a 262-residue protein sequence, read N- to C-terminus: ATP synthase subunit a 1 (262 aa).

A run of 5 helical transmembrane segments spans residues 30–50, 91–111, 131–151, 201–221, and 232–252; these read TVHI…ILVF, IAPL…MDLI, IVPT…FALM, LFGN…LMPW, and AIFH…LTIV.

Belongs to the ATPase A chain family. F-type ATPases have 2 components, CF(1) - the catalytic core - and CF(0) - the membrane proton channel. CF(1) has five subunits: alpha(3), beta(3), gamma(1), delta(1), epsilon(1). CF(0) has three main subunits: a(1), b(2) and c(9-12). The alpha and beta chains form an alternating ring which encloses part of the gamma chain. CF(1) is attached to CF(0) by a central stalk formed by the gamma and epsilon chains, while a peripheral stalk is formed by the delta and b chains.

The protein resides in the cell inner membrane. Its function is as follows. Key component of the proton channel; it plays a direct role in the translocation of protons across the membrane. The chain is ATP synthase subunit a 1 from Photobacterium profundum (strain SS9).